We begin with the raw amino-acid sequence, 719 residues long: Serine/threonine-protein kinase PAK 5 (719 aa).

5 disordered regions span residues M1–Q28, R96–G118, S226–C245, S253–P298, and V339–Q372. A CRIB domain is found at I11–G24. Positions F25 to Y448 are linker. Residue S104 is modified to Phosphoserine. A Phosphothreonine modification is found at T107. Residues S226–R244 show a composition bias toward polar residues. A compositionally biased stretch (polar residues) spans L357–Q372. Positions L449–L700 constitute a Protein kinase domain. ATP is bound by residues I455–V463 and K478. The active-site Proton acceptor is the D568.

This sequence belongs to the protein kinase superfamily. STE Ser/Thr protein kinase family. STE20 subfamily. In terms of assembly, interacts tightly with GTP-bound but not GDP-bound CDC42/p21 and RAC1. Interacts with MARK2, leading to inhibit MARK2 independently of kinase activity. Interacts with RHOD and RHOH. Post-translationally, autophosphorylated when activated by CDC42/p21. Highly expressed in brain and eye. Also expressed in adrenal gland, pancreas, prostate and testes. Within the brain, expression is restricted to neurons. Present in brain but not in kidney, lung and spleen (at protein level).

It is found in the mitochondrion. Its subcellular location is the cytoplasm. The protein localises to the nucleus. It catalyses the reaction L-seryl-[protein] + ATP = O-phospho-L-seryl-[protein] + ADP + H(+). The enzyme catalyses L-threonyl-[protein] + ATP = O-phospho-L-threonyl-[protein] + ADP + H(+). Its function is as follows. Serine/threonine protein kinase that plays a role in a variety of different signaling pathways including cytoskeleton regulation, cell migration, proliferation or cell survival. Activation by various effectors including growth factor receptors or active CDC42 and RAC1 results in a conformational change and a subsequent autophosphorylation on several serine and/or threonine residues. Phosphorylates the proto-oncogene RAF1 and stimulates its kinase activity. Promotes cell survival by phosphorylating the BCL2 antagonist of cell death BAD. Phosphorylates CTNND1, probably to regulate cytoskeletal organization and cell morphology. Keeps microtubules stable through MARK2 inhibition and destabilizes the F-actin network leading to the disappearance of stress fibers and focal adhesions. In Mus musculus (Mouse), this protein is Serine/threonine-protein kinase PAK 5.